A 469-amino-acid chain; its full sequence is MNSENALLQSDILAYLEQHEQKDMLRFLTCGSVDDGKSTLIGRLLHDSKMIYEDQLAAITKDSKKSGTTGDKVDLALLVDGLASEREQGITIDVAYRYFSTDKRKFIIADTPGHEQYTRNMVTGASTCDLAIILVDARAGVKTQTRRHSFLVSLLGIKHVIVAINKMDLMEFSEEVYENIKKDYLVFSEQLDIPDIQFVPISALDGDNVVNKSENTPWFEGSTLMKTLENIEIGNDANIDDFRFPVQYVNRPNLNFRGFAGTVVSGQIKKGDKITALPSGKQSTVRSIVGFEGEQEVAYTPLTTTITLEDEIDISRGDMIVKSDNLPLQSSAYEVNLVWMDETPLMPNKQYGFKFATKFVPGSVTDIEHQIDVNTMEHKEAVRLNLNEIGVGKIKLTQSVACDPYTKNRETGAFIIIDRLTNSTVGAGMVIDAIQDSGTKTEYSEFELEFNTLVRKHFPHWNATDITKL.

The 215-residue stretch at lysine 22 to aspartate 236 folds into the tr-type G domain. Positions glycine 31–serine 38 are G1. Glycine 31–serine 38 contacts GTP. Residues glycine 89–aspartate 93 form a G2 region. The interval aspartate 110–glycine 113 is G3. GTP contacts are provided by residues aspartate 110–histidine 114 and asparagine 165–aspartate 168. Positions asparagine 165 to aspartate 168 are G4. The interval serine 202 to leucine 204 is G5.

This sequence belongs to the TRAFAC class translation factor GTPase superfamily. Classic translation factor GTPase family. CysN/NodQ subfamily. As to quaternary structure, heterodimer composed of CysD, the smaller subunit, and CysN.

The enzyme catalyses sulfate + ATP + H(+) = adenosine 5'-phosphosulfate + diphosphate. Its pathway is sulfur metabolism; hydrogen sulfide biosynthesis; sulfite from sulfate: step 1/3. Its function is as follows. With CysD forms the ATP sulfurylase (ATPS) that catalyzes the adenylation of sulfate producing adenosine 5'-phosphosulfate (APS) and diphosphate, the first enzymatic step in sulfur assimilation pathway. APS synthesis involves the formation of a high-energy phosphoric-sulfuric acid anhydride bond driven by GTP hydrolysis by CysN coupled to ATP hydrolysis by CysD. The polypeptide is Sulfate adenylyltransferase subunit 1 (Pseudoalteromonas atlantica (strain T6c / ATCC BAA-1087)).